Here is a 66-residue protein sequence, read N- to C-terminus: Large ribosomal subunit protein bL31 (66 aa).

Zn(2+)-binding residues include C16, C18, C36, and C39.

It belongs to the bacterial ribosomal protein bL31 family. Type A subfamily. Part of the 50S ribosomal subunit. The cofactor is Zn(2+).

Its function is as follows. Binds the 23S rRNA. This is Large ribosomal subunit protein bL31 from Nautilia profundicola (strain ATCC BAA-1463 / DSM 18972 / AmH).